The following is a 99-amino-acid chain: CLAVATA3/ESR (CLE)-related protein 41 (99 aa).

The signal sequence occupies residues 1-34 (MATSNDQTNTKSSHSRTLLLLFIFLSLLLFSSLT). The disordered stretch occupies residues 60–99 (ASSTMDLRPKASTRRSRTSRRREFGNDAHEVPSGPNPISN). A compositionally biased stretch (basic residues) spans 70-79 (ASTRRSRTSR). A compositionally biased stretch (basic and acidic residues) spans 80–89 (RREFGNDAHE). 2 positions are modified to hydroxyproline: proline 91 and proline 94. O-linked (Ara...) hydroxyproline glycosylation is present at proline 94.

Belongs to the CLV3/ESR signal peptide family. CLE41p interacts specifically with the leucine-rich repeat receptor-like protein kinase TDR. In terms of processing, the O-glycosylation (arabinosylation) of the hydroxyproline Pro-94 enhances binding affinity of the CLE41p peptide for its receptor. Mostly expressed in inflorescence and roots, and, to a lower extent, in seedlings, flowers, leaves and siliques. Observed along the vascular strands in cotyledons, leaves and roots, but not in shoot apical meristems (SAM). Restricted to the phloem and the neighboring pericycle cells in the roots and hypocotyls.

The protein localises to the secreted. The protein resides in the extracellular space. Extracellular signal peptide that regulates cell fate. May act with TDR as a ligand-receptor pair in a signal transduction pathway that represses tracheary element differentiation but promotes the formation of procambial cells adjacent to phloem cells in the veins in an auxin-dependent manner. Regulates the transition of protophloem cells from proliferation to differentiation, thus impinging on postembryonic growth capacity of the root meristem; this signaling pathway requires CRN and CLV2. The sequence is that of CLAVATA3/ESR (CLE)-related protein 41 from Arabidopsis thaliana (Mouse-ear cress).